The chain runs to 299 residues: Farnesyl diphosphate synthase (299 aa).

K45, R48, and H77 together coordinate isopentenyl diphosphate. Residues D84 and D90 each coordinate Mg(2+). R95 is a (2E)-geranyl diphosphate binding site. R96 contacts isopentenyl diphosphate. K181, T182, Q220, and K237 together coordinate (2E)-geranyl diphosphate.

The protein belongs to the FPP/GGPP synthase family. It depends on Mg(2+) as a cofactor.

It is found in the cytoplasm. It catalyses the reaction isopentenyl diphosphate + (2E)-geranyl diphosphate = (2E,6E)-farnesyl diphosphate + diphosphate. The sequence is that of Farnesyl diphosphate synthase (ispA) from Escherichia coli (strain K12).